Here is a 433-residue protein sequence, read N- to C-terminus: B3 domain-containing protein Os04g0676600 (433 aa).

2 disordered regions span residues 1 to 29 (MADT…GGGQ) and 216 to 283 (FPPV…NSAN). The span at 13-24 (GDDRGREGHDDF) shows a compositional bias: basic and acidic residues. The span at 216-229 (FPPVSSSSRSFSSA) shows a compositional bias: low complexity. Over residues 237–265 (DAKKAKKSDIKDQPIVLRRSDTESEKNDE) the composition is skewed to basic and acidic residues. Residues 269 to 283 (TPASEPSSMSHNSAN) show a composition bias toward polar residues. The segment at residues 297–399 (LRKELTNSDV…KLVVRGEKAI (103 aa)) is a DNA-binding region (TF-B3).

It is found in the nucleus. Probable transcription regulator that binds specifically to the DNA sequence 5'-CATGC-3' of the IDE1 element found in the promoter of the barley iron deficiency-inducible gene IDS2. The protein is B3 domain-containing protein Os04g0676600 of Oryza sativa subsp. japonica (Rice).